Consider the following 331-residue polypeptide: GATA transcription factor 12 (331 aa).

Disordered regions lie at residues 30–49 (ENDV…SSNF) and 105–138 (SGFK…SVPA). Residues 34 to 47 (VADSTTTTTITDSS) are compositionally biased toward low complexity. The segment covering 116 to 134 (DTGSPENPNSSSPIFTTDV) has biased composition (polar residues). The Nuclear localization signal motif lies at 139–146 (KARSKRSR). The segment at 174–218 (SSQQHLSPPTSPPLLMAPLGKKQAVDGGHRRKKDVSSPESGGAEE) is disordered. A GATA-type zinc finger spans residues 215 to 269 (GAEERRCLHCATDKTPQWRTGPMGPKTLCNACGVRYKSGRLVPEYRPAASPTFVL).

This sequence belongs to the type IV zinc-finger family. Class A subfamily. In terms of tissue distribution, expressed in the vascular cylinder of roots. Expressed in the differentiation zone of the root stele.

The protein resides in the nucleus. Transcriptional activator that specifically binds 5'-GATA-3' or 5'-GAT-3' motifs within gene promoters. May be involved in the regulation of some light-responsive genes. Transcription activator involved in xylem formation. Functions upstream of NAC030/VND7, a master switch of xylem vessel differentiation. The sequence is that of GATA transcription factor 12 from Arabidopsis thaliana (Mouse-ear cress).